A 257-amino-acid polypeptide reads, in one-letter code: 1-(5-phosphoribosyl)-5-[(5-phosphoribosylamino)methylideneamino] imidazole-4-carboxamide isomerase (257 aa).

The protein belongs to the HisA/HisF family.

Its subcellular location is the cytoplasm. It carries out the reaction 1-(5-phospho-beta-D-ribosyl)-5-[(5-phospho-beta-D-ribosylamino)methylideneamino]imidazole-4-carboxamide = 5-[(5-phospho-1-deoxy-D-ribulos-1-ylimino)methylamino]-1-(5-phospho-beta-D-ribosyl)imidazole-4-carboxamide. The protein operates within amino-acid biosynthesis; L-histidine biosynthesis; L-histidine from 5-phospho-alpha-D-ribose 1-diphosphate: step 4/9. This is 1-(5-phosphoribosyl)-5-[(5-phosphoribosylamino)methylideneamino] imidazole-4-carboxamide isomerase (his-7) from Neurospora crassa (strain ATCC 24698 / 74-OR23-1A / CBS 708.71 / DSM 1257 / FGSC 987).